The sequence spans 154 residues: Probable chemoreceptor glutamine deamidase CheD (154 aa).

It belongs to the CheD family.

It carries out the reaction L-glutaminyl-[protein] + H2O = L-glutamyl-[protein] + NH4(+). Its function is as follows. Probably deamidates glutamine residues to glutamate on methyl-accepting chemotaxis receptors (MCPs), playing an important role in chemotaxis. In Methanococcus maripaludis (strain DSM 14266 / JCM 13030 / NBRC 101832 / S2 / LL), this protein is Probable chemoreceptor glutamine deamidase CheD.